A 1074-amino-acid polypeptide reads, in one-letter code: DNA-directed RNA polymerase subunit beta (1074 aa).

Belongs to the RNA polymerase beta chain family. In plastids the minimal PEP RNA polymerase catalytic core is composed of four subunits: alpha, beta, beta', and beta''. When a (nuclear-encoded) sigma factor is associated with the core the holoenzyme is formed, which can initiate transcription.

It localises to the plastid. It is found in the chloroplast. The enzyme catalyses RNA(n) + a ribonucleoside 5'-triphosphate = RNA(n+1) + diphosphate. DNA-dependent RNA polymerase catalyzes the transcription of DNA into RNA using the four ribonucleoside triphosphates as substrates. The sequence is that of DNA-directed RNA polymerase subunit beta from Chara vulgaris (Common stonewort).